A 2349-amino-acid chain; its full sequence is Reducing polyketide synthase AFT16-1 (2349 aa).

Positions 1 to 14 (MNGKSRDNGHDGKR) are enriched in basic and acidic residues. 2 disordered regions span residues 1-21 (MNGK…VPAE) and 37-80 (TNPS…TSNS). The Ketosynthase family 3 (KS3) domain occupies 20–462 (AEPIAIVGTA…GTNAHTILES (443 aa)). Residues cysteine 194, histidine 333, and histidine 382 each act as for beta-ketoacyl synthase activity in the active site. Residues 578-888 (VFTGQGAQWP…LLYKGVLERF (311 aa)) are malonyl-CoA:ACP transacylase (MAT) domain. Residues 958 to 1092 (HPLLGFRSVD…GDILLSHFAK (135 aa)) form an N-terminal hotdog fold region. The interval 958 to 1263 (HPLLGFRSVD…QVEGLKFSCM (306 aa)) is dehydratase (DH) domain. The PKS/mFAS DH domain occupies 958 to 1269 (HPLLGFRSVD…FSCMYPAQET (312 aa)). Histidine 990 (proton acceptor; for dehydratase activity) is an active-site residue. A C-terminal hotdog fold region spans residues 1111-1269 (MSSVEPSLFY…FSCMYPAQET (159 aa)). Residue aspartate 1170 is the Proton donor; for dehydratase activity of the active site. The interval 1976–2164 (SPNKTYLLVG…VVGVGYVARA (189 aa)) is ketoreductase (KR) domain. Positions 2273–2347 (EILSGSLKQK…GLCLEAIGQW (75 aa)) constitute a Carrier domain. O-(pantetheine 4'-phosphoryl)serine is present on serine 2307.

It functions in the pathway mycotoxin biosynthesis. Its function is as follows. Reducing polyketide synthase; part of the gene clusters that mediate the biosynthesis of the host-selective toxins (HSTs) AF-toxins responsible for Alternaria black spot of strawberry disease by the strawberry pathotype. AF-toxin I and III are valine derivatives of 2,3-dyhydroxy-isovaleric acid and 2-hydroxy-isovaleric acid respectively, while AF II is an isoleucine derivative of 2-hydroxy-valeric acid. These derivatives are bound to a 9,10-epoxy-8-hydroxy-9-methyl-decatrienoic acid (EDA) moiety. On cellular level, AF-toxins affect plasma membrane of susceptible cells and cause a sudden increase in loss of K(+) after a few minutes of toxin treatment. The aldo-keto reductase AFTS1 catalyzes the conversion of 2-keto-isovaleric acid (2-KIV) to 2-hydroxy-isovaleric acid (2-HIV) by reduction of its ketone to an alcohol. The acyl-CoA ligase AFT1, the hydrolase AFT2 and the enoyl-CoA hydratases AFT3 and AFT6, but also the polyketide synthase AFT9, the acyl-CoA dehydrogenase AFT10, the cytochrome P450 monooxygenase AFT11 and the oxidoreductase AFT12 are all involved in the biosynthesis of the AK-, AF- and ACT-toxin common EDA structural moiety. The exact function of each enzyme, and of additional enzymes identified within the AF-toxin clusters have still to be determined. The chain is Reducing polyketide synthase AFT16-1 from Alternaria alternata (Alternaria rot fungus).